A 245-amino-acid chain; its full sequence is Probable phosphatase Ent638_1550 (245 aa).

Zn(2+)-binding residues include His7, His9, His15, His40, Glu73, His101, His131, Asp192, and His194.

The protein belongs to the PHP family. As to quaternary structure, homotrimer. Requires Zn(2+) as cofactor.

This Enterobacter sp. (strain 638) protein is Probable phosphatase Ent638_1550.